A 377-amino-acid chain; its full sequence is MRVGIPTEIKVQEFRVGITPAGVHALKEAGHTVLVQKGAGLGSMITDEEYVAAGAQMVATAKECWDCDMVVKVKEPLAPEYDLFHEGLILYTYLHLAPEPALTKALLEKKVIGIAYETVQFDNGFLPLLAPMSEVAGRMATQVGAQMLTKIEGGMGLLMGGTAGVQAAHVVILGAGTVGLSAAKVAMGMGARVTILDSNLFRLRQIDDLFGGRIQTLASNAFNIAAATKDADLLVGSVLIPGALTPKLVTEAMVKTMKPGSAIVDVAIDQGGCIEPTAKHGATYHDKPTFKYPVNGGEVVCYSVGNMPGAVARTSTFTLTNATMPYMVDLANKGWKKACQDDKALARGINTYDGKVYFKGVSDALGYELHCTCDILK.

Substrate is bound by residues Arg15 and Lys74. The Proton donor/acceptor role is filled by His95. Residues Ser133, Asp197, Arg202, Ser219, 238–239 (VL), 266–269 (VAID), and 304–307 (VGNM) contribute to the NAD(+) site. Asp269 (proton donor/acceptor) is an active-site residue.

This sequence belongs to the AlaDH/PNT family. Homohexamer.

It catalyses the reaction L-alanine + NAD(+) + H2O = pyruvate + NH4(+) + NADH + H(+). The protein operates within organosulfur degradation; alkanesulfonate degradation. Its function is as follows. Involved in an anaerobic respiration pathway that converts the sulfonate taurine (2-aminoethanesulfonate) to ammonia, acetate and sulfide. Acts as an alanine dehydrogenase that regenerates pyruvate, the amino group acceptor for the taurine--pyruvate aminotransferase enzyme, and liberates ammonia. The chain is Alanine dehydrogenase from Bilophila wadsworthia (strain 3_1_6).